Here is a 352-residue protein sequence, read N- to C-terminus: Dihydrorhizobitoxine desaturase (352 aa).

A run of 3 helical transmembrane segments spans residues 53–73 (LATL…IGAY), 89–109 (LAKN…YPLF), and 204–224 (IGIL…LFWI).

This sequence belongs to the fatty acid desaturase type 1 family.

It is found in the cell inner membrane. It carries out the reaction dihydrorhizobitoxine + 2 reduced [2Fe-2S]-[ferredoxin] + O2 + 2 H(+) = rhizobitoxine + 2 oxidized [2Fe-2S]-[ferredoxin] + 2 H2O. Functionally, involved in the biosynthesis of the nodulation enhancer compound rhizobitoxine. Catalyzes the final step of the pathway, the introduction of a carbon double bond into the C3 position of dihydrorhizobitoxine to produce rhizobitoxine. The sequence is that of Dihydrorhizobitoxine desaturase from Bradyrhizobium elkanii.